A 159-amino-acid chain; its full sequence is Cyclic pyranopterin monophosphate synthase (159 aa).

Substrate contacts are provided by residues 75-77 (LCH) and 113-114 (ME). Residue aspartate 128 is part of the active site.

This sequence belongs to the MoaC family. Homohexamer; trimer of dimers.

It carries out the reaction (8S)-3',8-cyclo-7,8-dihydroguanosine 5'-triphosphate = cyclic pyranopterin phosphate + diphosphate. Its pathway is cofactor biosynthesis; molybdopterin biosynthesis. Its function is as follows. Catalyzes the conversion of (8S)-3',8-cyclo-7,8-dihydroguanosine 5'-triphosphate to cyclic pyranopterin monophosphate (cPMP). This chain is Cyclic pyranopterin monophosphate synthase, found in Serratia proteamaculans (strain 568).